We begin with the raw amino-acid sequence, 1615 residues long: Ferredoxin-dependent glutamate synthase, chloroplastic (1615 aa).

A chloroplast-targeting transit peptide spans 1-52; that stretch reads MATLPRAAAAAAPSPAAALLPLPRAAPLLAGRAAARSAARRLRARGTRAPPL. Cys97 (nucleophile) is an active-site residue. The region spanning 97 to 496 is the Glutamine amidotransferase type-2 domain; that stretch reads CGVGFVANLK…PGMMITVDLQ (400 aa). An FMN-binding site is contributed by 1175–1232; the sequence is LSETHQTLIQNGLRERVVLRVDGGFRSGLDVLMAAAMGADEYGFGSVAMIATGCVMAR. Residues Cys1228, Cys1234, and Cys1239 each coordinate [3Fe-4S] cluster.

It belongs to the glutamate synthase family. The cofactor is [3Fe-4S] cluster. Requires FAD as cofactor. FMN is required as a cofactor. In terms of tissue distribution, expressed in leaf blades and at lower levels in roots.

The protein localises to the plastid. The protein resides in the chloroplast. It catalyses the reaction 2 oxidized [2Fe-2S]-[ferredoxin] + 2 L-glutamate = L-glutamine + 2 reduced [2Fe-2S]-[ferredoxin] + 2-oxoglutarate + 2 H(+). The protein operates within amino-acid biosynthesis; L-glutamate biosynthesis via GLT pathway; L-glutamate from 2-oxoglutarate and L-glutamine (ferredoxin route): step 1/1. It functions in the pathway energy metabolism; nitrogen metabolism. Its function is as follows. Involved in glutamate biosynthesis in leaf. Required for the reassimilation of ammonium ions generated during photorespiration. The sequence is that of Ferredoxin-dependent glutamate synthase, chloroplastic (GLU) from Oryza sativa subsp. japonica (Rice).